The primary structure comprises 971 residues: Xylanolytic transcriptional activator xlnR (971 aa).

Disordered stretches follow at residues 1-25 and 55-123; these read MSTT…PVGM and GASA…PVRR. A compositionally biased stretch (low complexity) spans 9–18; sequence FTSSFSPFSS. Polar residues predominate over residues 67-96; sequence LRSSISKPQGQQLYSDESSAQHTQNATTGF. A DNA-binding region (zn(2)-C6 fungal-type) is located at residues 129–155; sequence CDQCNQLRTKCDGQNPCAHCIEFGLTC. 3 stretches are compositionally biased toward polar residues: residues 182 to 199, 227 to 241, and 249 to 260; these read NGTA…SVSS, NLAT…QHSD, and QGSQQTPHSQPS. Disordered regions lie at residues 182–263, 295–316, and 580–610; these read NGTA…SLGG, LHPS…GMNS, and RELP…NLPP.

It belongs to the xlnR/xlr1 family.

The protein localises to the nucleus. Its function is as follows. Transcriptional activator of the xylanolytic system. Involved in the regulation of extracellular cellulolytic and xylanolytic genes and in the regulation of the intracellular activities of D-xylose catabolic genes in the pentose catabolic pathway (PCP) in response to the presence of D-xylose. The protein is Xylanolytic transcriptional activator xlnR (xlnR) of Aspergillus flavus (strain ATCC 200026 / FGSC A1120 / IAM 13836 / NRRL 3357 / JCM 12722 / SRRC 167).